We begin with the raw amino-acid sequence, 278 residues long: S-formylglutathione hydrolase YeiG (278 aa).

Active-site charge relay system residues include Ser-145, Asp-223, and His-256.

It belongs to the esterase D family.

The catalysed reaction is S-formylglutathione + H2O = formate + glutathione + H(+). Serine hydrolase involved in the detoxification of formaldehyde. Hydrolyzes S-formylglutathione to glutathione and formate. The sequence is that of S-formylglutathione hydrolase YeiG (yeiG) from Shigella dysenteriae serotype 1 (strain Sd197).